The primary structure comprises 183 residues: UPF0397 protein VSAL_I1988 (183 aa).

The next 5 membrane-spanning stretches (helical) occupy residues 8-28 (VVVIAIGAALYGIGGLPMFGI), 41-61 (AVLALFSVLYGPIVGFLVGFI), 74-94 (VWLTWILGSGIVGMIIGLFPI), 110-130 (FFIFVVLAFVGNVIGYGTSAF), and 147-167 (LCIIAAGNTVLIAVVGYFILT).

This sequence belongs to the UPF0397 family.

It is found in the cell membrane. This is UPF0397 protein VSAL_I1988 from Aliivibrio salmonicida (strain LFI1238) (Vibrio salmonicida (strain LFI1238)).